A 196-amino-acid polypeptide reads, in one-letter code: Pyridoxal 5'-phosphate synthase subunit PdxT (196 aa).

47–49 is a binding site for L-glutamine; it reads GES. Cys-79 serves as the catalytic Nucleophile. L-glutamine contacts are provided by residues Arg-106 and 134-135; that span reads IR. Catalysis depends on charge relay system residues His-170 and Glu-172.

Belongs to the glutaminase PdxT/SNO family. As to quaternary structure, in the presence of PdxS, forms a dodecamer of heterodimers. Only shows activity in the heterodimer.

The enzyme catalyses aldehydo-D-ribose 5-phosphate + D-glyceraldehyde 3-phosphate + L-glutamine = pyridoxal 5'-phosphate + L-glutamate + phosphate + 3 H2O + H(+). It catalyses the reaction L-glutamine + H2O = L-glutamate + NH4(+). It functions in the pathway cofactor biosynthesis; pyridoxal 5'-phosphate biosynthesis. Catalyzes the hydrolysis of glutamine to glutamate and ammonia as part of the biosynthesis of pyridoxal 5'-phosphate. The resulting ammonia molecule is channeled to the active site of PdxS. The polypeptide is Pyridoxal 5'-phosphate synthase subunit PdxT (Bacillus cereus (strain G9842)).